Reading from the N-terminus, the 146-residue chain is Probable acetyltransferase HI_0677 (146 aa).

Residues Met-1–Cys-146 form the N-acetyltransferase domain.

This is Probable acetyltransferase HI_0677 from Haemophilus influenzae (strain ATCC 51907 / DSM 11121 / KW20 / Rd).